The following is a 440-amino-acid chain: Putative sodium-coupled neutral amino acid transporter 8 (440 aa).

Transmembrane regions (helical) follow at residues 29–49 (AIFIMLKSALGAGLLNFPWAF), 58–78 (AIMVELVSLIFLISGLVILGY), 100–120 (IGKLCGICYIINLFMICVAFL), 156–176 (FAITVLCLVIILPLSIPKEIS), 183–203 (ILGTLAACYLTVMIIIKYYVM), 223–243 (MFSVVPTICFGFQCHEACVTI), 255–275 (WAAVSVVSMLICLLIYSFTGI), 300–320 (VIIARLLFTISIITIYPIILL), 350–370 (VVITVLWILVTLLIALFVPDI), 373–393 (VISVIGGISAFFIFIFPGLCL), and 418–438 (VVCGAFVFGQSTTIAVMEIIA).

It belongs to the amino acid/polyamine transporter 2 family.

Its subcellular location is the membrane. In terms of biological role, putative sodium-dependent amino acid/proton antiporter. The chain is Putative sodium-coupled neutral amino acid transporter 8 (slc38a8) from Xenopus tropicalis (Western clawed frog).